The primary structure comprises 1820 residues: Sodium channel protein (1820 aa).

The Cytoplasmic segment spans residues 1–117 (MARKFSSARP…FNPIRRGAIR (117 aa)). An I repeat occupies 108–410 (FNPIRRGAIR…VAMAYEEQNQ (303 aa)). The helical transmembrane segment at 118–138 (VFVNSAFNFFIMFTIFSNCIF) threads the bilayer. The Extracellular segment spans residues 139–149 (MTISNPPAWSK). The helical transmembrane segment at 150–171 (IVEYTFTGIYTFEVIVKVLSRG) threads the bilayer. Residues 172 to 176 (FCIGH) are Cytoplasmic-facing. A helical transmembrane segment spans residues 177-197 (FTFLRDPWNWLDFSVVTMTYI). Topologically, residues 198-203 (TEFIDL) are extracellular. Residues 204-224 (RNVSALRTFRVLRALKTITIF) traverse the membrane as a helical; Voltage-sensor segment. The Cytoplasmic portion of the chain corresponds to 225–243 (PGLKTIVRALIESMKQMGD). The helical transmembrane segment at 244–264 (VVILTVFSLAVFTLAGMQLFM) threads the bilayer. The Extracellular segment spans residues 265-346 (GNLRHKCIRW…PNYGYTNYDN (82 aa)). A disulfide bridge connects residues Cys271 and Cys324. N-linked (GlcNAc...) asparagine glycosylation is found at Asn278, Asn288, and Asn317. The non-homologous region of repeat I stretch occupies residues 285–342 (SAYNTTFDFTAYIENEENQYFLDGALDALLCGNNSDAGKCPEGYTCMKAGRNPNYGYT). An intramembrane region (pore-forming) is located at residues 347 to 371 (FAWTFLCLFRLMLQDYWENLYQMTL). The Extracellular segment spans residues 372-378 (RAAGKSY). A helical transmembrane segment spans residues 379–402 (MVFFIMVIFLGSFYLINLILAVVA). Residues 403–557 (MAYEEQNQAT…CCGPWVFLKK (155 aa)) are Cytoplasmic-facing. The segment at 483-507 (SVKLSTEEQRSDSKSMDSKHSVDKP) is disordered. Positions 487–507 (STEEQRSDSKSMDSKHSVDKP) are enriched in basic and acidic residues. An II repeat occupies 548–811 (CCGPWVFLKK…EEDDEVNSLQ (264 aa)). The helical transmembrane segment at 558 to 578 (WVHFVMMDPFTDLFITLCIIL) threads the bilayer. Over 579–599 (NTLFMSIEHHPMNESFQSLLS) the chain is Extracellular. Residue Asn591 is glycosylated (N-linked (GlcNAc...) asparagine). A helical membrane pass occupies residues 600-620 (AGNLVFTTIFAAEMVLKIIAL). At 621–625 (DPYYY) the chain is on the cytoplasmic side. Residues 626-643 (FQQTWNIFDSIIVSLSLL) form a helical membrane-spanning segment. The Extracellular segment spans residues 644-650 (ELGLSNM). The helical; Voltage-sensor transmembrane segment at 651 to 671 (QGMSVLRSLRLLRIFKLAKSW) threads the bilayer. At 672-690 (PTLNILIKIICNSVGALGN) the chain is on the cytoplasmic side. Residues 691 to 711 (LTIVLAIIVFIFALVGFQLFG) traverse the membrane as a helical segment. Over 712 to 734 (KNYKEYVCKISDDCELPRWHMND) the chain is Extracellular. The pore-forming intramembrane region spans 735–755 (FFHSFLIVFRALCGEWIETMW). Over 756-766 (DCMEVGGVPMC) the chain is Extracellular. Residues Cys757 and Cys766 are joined by a disulfide bond. The chain crosses the membrane as a helical span at residues 767 to 790 (LAVYMMVIIIGNLVMLNLFLALLL). At 791–1004 (SSFSSDNLSS…TIVEHDYFET (214 aa)) the chain is on the cytoplasmic side. Disordered stretches follow at residues 844 to 864 (PPSD…DTLP) and 891 to 959 (VKGE…SKDP). The segment covering 896–910 (EIEEEGLVDSSDEED) has biased composition (acidic residues). Positions 924 to 935 (SVCSTVDYSPSE) are enriched in polar residues. Acidic residues predominate over residues 942 to 953 (EEEEEEEEEPEE). One copy of the III repeat lies at 988–1295 (NLRRTCYTIV…KKYYNAMKKL (308 aa)). A helical membrane pass occupies residues 1005 to 1025 (FIIFMILLSSGVLAFEDIYIW). Residues 1026 to 1037 (RRRVIKVILEYA) are Extracellular-facing. Residues 1038 to 1058 (DKVFTYVFIVEMLLKWVAYGF) form a helical membrane-spanning segment. Residues 1059 to 1065 (KRYFTDA) are Cytoplasmic-facing. Residues 1066–1086 (WCWLDFVIVGASIMGITSSLL) traverse the membrane as a helical segment. The Extracellular portion of the chain corresponds to 1087-1091 (GYEEL). A helical; Voltage-sensor transmembrane segment spans residues 1092 to 1112 (GAIKNLRTIRALRPLRALSRF). Over 1113-1131 (EGMKVVVRALLGAIPSIMN) the chain is Cytoplasmic. The chain crosses the membrane as a helical span at residues 1132-1152 (VLLVCLMFWLIFSIMGVNLFA). The Extracellular segment spans residues 1153-1199 (GKFYRCINTTTDEILPVEEVNNRSDCMALMYTNEVRWVNLKVNYDNA). Residues Asn1160 and Asn1174 are each glycosylated (N-linked (GlcNAc...) asparagine). Residues 1172-1194 (VNNRSDCMALMYTNEVRWVNLKV) are non-homologous region of repeat III. The pore-forming intramembrane region spans 1200-1221 (GMGYLSLLQVSTFKGWMDIMYA). Residues 1222 to 1243 (AVDSREVEDQPIYEINVYMYLY) are Extracellular-facing. A helical membrane pass occupies residues 1244–1264 (FVIFIVFGAFFTLNLFIGVII). Residues 1265 to 1320 (DNFNRQKQKLGGEDLFMTEEQKKYYNAMKKLGSKKAAKCIPRPSNVVQGVVYDIVT) lie on the Cytoplasmic side of the membrane. One copy of the IV repeat lies at 1304–1602 (IPRPSNVVQG…WHKFDVHGTQ (299 aa)). Residues 1321–1341 (QPFTDIFIMALICINMVAMMV) traverse the membrane as a helical segment. Over 1342 to 1352 (ESEDQSQVKKD) the chain is Extracellular. The chain crosses the membrane as a helical span at residues 1353 to 1376 (ILSQINVIFVIIFTVECLLKLLAL). Over 1377 to 1380 (RQYF) the chain is Cytoplasmic. The chain crosses the membrane as a helical span at residues 1381 to 1398 (FTVGWNVFDFAVVVISII). Residues 1399-1416 (GLLLSDIIEKYFVSPTLF) are Extracellular-facing. Residues 1417 to 1437 (RVIRLARIARVLRLIRAAKGI) traverse the membrane as a helical; Voltage-sensor segment. Topologically, residues 1438–1453 (RTLLFALMMSLPALFN) are cytoplasmic. The helical transmembrane segment at 1454-1474 (IGLLLFLIMFIFSIFGMSNFA) threads the bilayer. The Extracellular portion of the chain corresponds to 1475–1490 (YVKKQGGVDDIFNFET). The interval 1490–1505 (TFGNSMICLFEITTSA) is non-homologous region of repeat IV. The segment at residues 1491–1513 (FGNSMICLFEITTSAGWDGLLLP) is an intramembrane region (pore-forming). At 1514–1543 (TLNTGPPDCDPDVENPGTDVRGNCGNPGKG) the chain is on the extracellular side. A helical membrane pass occupies residues 1544–1567 (ITFFCSYIILSFLVVVNMYIAIIL). The Cytoplasmic segment spans residues 1568–1820 (ENFGVAQEES…GAIVVRESIV (253 aa)).

It belongs to the sodium channel (TC 1.A.1.10) family.

Its subcellular location is the cell membrane. Mediates the voltage-dependent sodium ion permeability of excitable membranes. Assuming opened or closed conformations in response to the voltage difference across the membrane, the protein forms a sodium-selective channel through which Na(+) ions may pass in accordance with their electrochemical gradient. In Electrophorus electricus (Electric eel), this protein is Sodium channel protein.